The chain runs to 119 residues: uncharacterized protein (119 aa).

This is an uncharacterized protein from Escherichia coli (Bacteriophage T4).